The sequence spans 255 residues: uncharacterized protein (255 aa).

The a divalent metal cation site is built by histidine 6, histidine 8, glutamate 92, histidine 128, histidine 153, and aspartate 203.

This sequence belongs to the metallo-dependent hydrolases superfamily. TatD-type hydrolase family. A divalent metal cation is required as a cofactor.

This is an uncharacterized protein from Bacillus subtilis (strain 168).